The chain runs to 709 residues: Elongation factor G (709 aa).

Residues 8 to 297 (ANTRNIGIMA…AVIDYLPSPL (290 aa)) enclose the tr-type G domain. GTP-binding positions include 17 to 24 (AHVDAGKT), 81 to 85 (DTPGH), and 135 to 138 (NKMD).

The protein belongs to the TRAFAC class translation factor GTPase superfamily. Classic translation factor GTPase family. EF-G/EF-2 subfamily.

The protein localises to the cytoplasm. Its function is as follows. Catalyzes the GTP-dependent ribosomal translocation step during translation elongation. During this step, the ribosome changes from the pre-translocational (PRE) to the post-translocational (POST) state as the newly formed A-site-bound peptidyl-tRNA and P-site-bound deacylated tRNA move to the P and E sites, respectively. Catalyzes the coordinated movement of the two tRNA molecules, the mRNA and conformational changes in the ribosome. In Lactococcus lactis subsp. lactis (strain IL1403) (Streptococcus lactis), this protein is Elongation factor G.